The primary structure comprises 83 residues: Putative defensin-like protein 66 (83 aa).

The N-terminal stretch at 1–22 (MGSSRLMITFIVVAMLAISSDL) is a signal peptide. 4 cysteine pairs are disulfide-bonded: cysteine 38/cysteine 82, cysteine 42/cysteine 65, cysteine 51/cysteine 80, and cysteine 55/cysteine 81.

This sequence belongs to the DEFL family.

The protein localises to the secreted. In Arabidopsis thaliana (Mouse-ear cress), this protein is Putative defensin-like protein 66.